We begin with the raw amino-acid sequence, 301 residues long: MAGGGGAGSKVSVAAVQFACTDVESENVDTAERLIREAHKKGANIVLVQELFEGQYFCQAQRLDFFQRAKPYKGNPTIIRFQKLAKELEVVIPVSFFEEANNAHYNSVAIIDADGTDLGLYRKSHIPDGPGYQEKFYFNPGDTGFKAFKTKYATIGVGICWDQWFPECARAMVLQGAEILFYPTAIGSEPQDNNLDSREHWKRVMQGHAGANLVPLVASNRIGRETVETEHGESTITFFGNSFIAGPTGEIVKLANDKDEDVLVAEFDLDEIKSTRHGWGIFRDRRPDLYKVLLTLDGEKS.

The CN hydrolase domain occupies 11-269; it reads VSVAAVQFAC…EDVLVAEFDL (259 aa). The active-site Proton acceptor is Glu50. Lys123 (proton donor) is an active-site residue. The active-site Nucleophile is Cys160.

The protein belongs to the carbon-nitrogen hydrolase superfamily. Homooctamer.

The enzyme catalyses N-carbamoylputrescine + H2O + 2 H(+) = putrescine + NH4(+) + CO2. The protein operates within amine and polyamine biosynthesis; putrescine biosynthesis via agmatine pathway; putrescine from N-carbamoylputrescine (amidase route): step 1/1. In terms of biological role, involved in polyamine biosynthesis. In Oryza sativa subsp. japonica (Rice), this protein is N-carbamoylputrescine amidase (CPA).